Reading from the N-terminus, the 400-residue chain is Phosphoglycerate kinase (400 aa).

Residues 21-23 (DLN), Arg36, 59-62 (HLGR), Arg116, and Arg149 each bind substrate. ATP-binding positions include Lys200, Glu317, and 343–346 (GGDT).

This sequence belongs to the phosphoglycerate kinase family. As to quaternary structure, monomer.

The protein localises to the cytoplasm. It carries out the reaction (2R)-3-phosphoglycerate + ATP = (2R)-3-phospho-glyceroyl phosphate + ADP. The protein operates within carbohydrate degradation; glycolysis; pyruvate from D-glyceraldehyde 3-phosphate: step 2/5. The chain is Phosphoglycerate kinase from Blochmanniella floridana.